Here is a 461-residue protein sequence, read N- to C-terminus: Cysteine--tRNA ligase (461 aa).

Residue Cys28 coordinates Zn(2+). Residues 30 to 40 (ITVYDLCHIGH) carry the 'HIGH' region motif. Positions 209, 234, and 238 each coordinate Zn(2+). The 'KMSKS' region motif lies at 266–270 (KMSKS). Lys269 serves as a coordination point for ATP.

The protein belongs to the class-I aminoacyl-tRNA synthetase family. In terms of assembly, monomer. It depends on Zn(2+) as a cofactor.

The protein localises to the cytoplasm. The enzyme catalyses tRNA(Cys) + L-cysteine + ATP = L-cysteinyl-tRNA(Cys) + AMP + diphosphate. The sequence is that of Cysteine--tRNA ligase from Escherichia coli O127:H6 (strain E2348/69 / EPEC).